Consider the following 122-residue polypeptide: UPF0102 protein NGR_c36770 (122 aa).

This sequence belongs to the UPF0102 family.

This is UPF0102 protein NGR_c36770 from Sinorhizobium fredii (strain NBRC 101917 / NGR234).